The following is a 372-amino-acid chain: Queuine tRNA-ribosyltransferase (372 aa).

Asp92 (proton acceptor) is an active-site residue. Substrate-binding positions include 92 to 96, Asp146, Gln188, and Gly215; that span reads DSGGF. The RNA binding stretch occupies residues 246-252; the sequence is GIGTLRE. The Nucleophile role is filled by Asp265. The interval 270–274 is RNA binding; important for wobble base 34 recognition; the sequence is TRLGR. Cys303, Cys305, Cys308, and His334 together coordinate Zn(2+).

The protein belongs to the queuine tRNA-ribosyltransferase family. As to quaternary structure, homodimer. Within each dimer, one monomer is responsible for RNA recognition and catalysis, while the other monomer binds to the replacement base PreQ1. Requires Zn(2+) as cofactor.

It catalyses the reaction 7-aminomethyl-7-carbaguanine + guanosine(34) in tRNA = 7-aminomethyl-7-carbaguanosine(34) in tRNA + guanine. It functions in the pathway tRNA modification; tRNA-queuosine biosynthesis. Catalyzes the base-exchange of a guanine (G) residue with the queuine precursor 7-aminomethyl-7-deazaguanine (PreQ1) at position 34 (anticodon wobble position) in tRNAs with GU(N) anticodons (tRNA-Asp, -Asn, -His and -Tyr). Catalysis occurs through a double-displacement mechanism. The nucleophile active site attacks the C1' of nucleotide 34 to detach the guanine base from the RNA, forming a covalent enzyme-RNA intermediate. The proton acceptor active site deprotonates the incoming PreQ1, allowing a nucleophilic attack on the C1' of the ribose to form the product. After dissociation, two additional enzymatic reactions on the tRNA convert PreQ1 to queuine (Q), resulting in the hypermodified nucleoside queuosine (7-(((4,5-cis-dihydroxy-2-cyclopenten-1-yl)amino)methyl)-7-deazaguanosine). This chain is Queuine tRNA-ribosyltransferase, found in Synechococcus sp. (strain CC9311).